Consider the following 344-residue polypeptide: Uroporphyrinogen decarboxylase (344 aa).

Substrate is bound by residues 24–28, Phe-43, Asp-74, Tyr-149, Ser-204, and His-319; that span reads RQAGR.

It belongs to the uroporphyrinogen decarboxylase family. In terms of assembly, homodimer.

It localises to the cytoplasm. The enzyme catalyses uroporphyrinogen III + 4 H(+) = coproporphyrinogen III + 4 CO2. Its pathway is porphyrin-containing compound metabolism; protoporphyrin-IX biosynthesis; coproporphyrinogen-III from 5-aminolevulinate: step 4/4. Catalyzes the decarboxylation of four acetate groups of uroporphyrinogen-III to yield coproporphyrinogen-III. In Agrobacterium fabrum (strain C58 / ATCC 33970) (Agrobacterium tumefaciens (strain C58)), this protein is Uroporphyrinogen decarboxylase.